The sequence spans 445 residues: Polyadenylate-binding protein RBP47A (445 aa).

Residues 1–12 show a composition bias toward polar residues; it reads MQTPNNNGSTDS. 2 disordered regions span residues 1–45 and 93–117; these read MQTP…WQQQ and AAYQQQQQQHHQSQQQPRGGSGGDD. Pro residues predominate over residues 22 to 35; sequence TPPPPLQQSTPPPQ. Low complexity-rich tracts occupy residues 36–45 and 93–108; these read QQQQQQWQQQ and AAYQQQQQQHHQSQQQ. 3 RRM domains span residues 119–199, 213–292, and 327–399; these read KTLW…WASF, LSIF…IATP, and STIF…WGRS.

It belongs to the polyadenylate-binding RBP47 family. Interacts with the poly(A) tail of mRNA in nucleus. Expressed in leaves, stems, flowers, and seedlings.

It localises to the nucleus. It is found in the cytoplasmic granule. Its function is as follows. Heterogeneous nuclear ribonucleoprotein (hnRNP)-protein binding the poly(A) tail of mRNA and probably involved in some steps of pre-mRNA maturation. In Arabidopsis thaliana (Mouse-ear cress), this protein is Polyadenylate-binding protein RBP47A (RBP47A).